The chain runs to 106 residues: NADH-quinone oxidoreductase subunit K (106 aa).

The next 3 helical transmembrane spans lie at 10-30 (IHYY…GVMV), 35-55 (VLIF…FVTF), and 67-87 (VVFF…AIVI).

The protein belongs to the complex I subunit 4L family. NDH-1 is composed of 14 different subunits. Subunits NuoA, H, J, K, L, M, N constitute the membrane sector of the complex.

It localises to the cell inner membrane. It carries out the reaction a quinone + NADH + 5 H(+)(in) = a quinol + NAD(+) + 4 H(+)(out). In terms of biological role, NDH-1 shuttles electrons from NADH, via FMN and iron-sulfur (Fe-S) centers, to quinones in the respiratory chain. The immediate electron acceptor for the enzyme in this species is believed to be ubiquinone. Couples the redox reaction to proton translocation (for every two electrons transferred, four hydrogen ions are translocated across the cytoplasmic membrane), and thus conserves the redox energy in a proton gradient. The polypeptide is NADH-quinone oxidoreductase subunit K (Leptospira interrogans serogroup Icterohaemorrhagiae serovar copenhageni (strain Fiocruz L1-130)).